Consider the following 155-residue polypeptide: Microsomal glutathione S-transferase 1 (155 aa).

Topologically, residues 3–9 (DLTELMK) are lumenal. The chain crosses the membrane as a helical span at residues 10–33 (NEVFMAFASYATIVLSKMMFMSTA). Residues 34–62 (TAFYRLTRKVFANPEDCSSFGKGENAKKY) lie on the Cytoplasmic side of the membrane. Residue Arg38 participates in glutathione binding. Lys42, Lys55, and Lys60 each carry N6-acetyllysine. A helical membrane pass occupies residues 63–96 (LRTDERVERVRRAHLNDLENIVPFLGIGLLYSLS). Residues Arg73, Arg74, His76, and Glu81 each coordinate glutathione. The Lumenal portion of the chain corresponds to 97-99 (GPD). The chain crosses the membrane as a helical span at residues 100 to 123 (LSTAILHFRLFVGARIYHTIAYLT). Tyr121 contributes to the glutathione binding site. Topologically, residues 124–128 (PLPQP) are cytoplasmic. The chain crosses the membrane as a helical span at residues 129–148 (NRGLAFFLGYGVTLSMAYRL). Topologically, residues 149–155 (LKSRLYL) are lumenal.

This sequence belongs to the MAPEG family. In terms of assembly, homotrimer; The trimer binds only one molecule of glutathione.

The protein resides in the endoplasmic reticulum membrane. Its subcellular location is the mitochondrion outer membrane. The enzyme catalyses RX + glutathione = an S-substituted glutathione + a halide anion + H(+). Its function is as follows. Conjugation of reduced glutathione to a wide number of exogenous and endogenous hydrophobic electrophiles. This chain is Microsomal glutathione S-transferase 1 (MGST1), found in Sus scrofa (Pig).